Reading from the N-terminus, the 353-residue chain is Holliday junction branch migration complex subunit RuvB (353 aa).

The segment at 4–186 is large ATPase domain (RuvB-L); it reads ADRLIAATHS…FGIVQRLEFY (183 aa). ATP is bound by residues Ile25, Arg26, Gly67, Lys70, Thr71, Thr72, 133-135, Arg176, Tyr186, and Arg223; that span reads EDF. Thr71 contributes to the Mg(2+) binding site. Positions 187–257 are small ATPAse domain (RuvB-S); sequence STADLATIVS…VADLALNLLD (71 aa). Residues 260–353 form a head domain (RuvB-H) region; the sequence is EHGFDHQDRR…VDEFLDAVDD (94 aa). The DNA site is built by Arg296, Arg315, and Arg320.

Belongs to the RuvB family. In terms of assembly, homohexamer. Forms an RuvA(8)-RuvB(12)-Holliday junction (HJ) complex. HJ DNA is sandwiched between 2 RuvA tetramers; dsDNA enters through RuvA and exits via RuvB. An RuvB hexamer assembles on each DNA strand where it exits the tetramer. Each RuvB hexamer is contacted by two RuvA subunits (via domain III) on 2 adjacent RuvB subunits; this complex drives branch migration. In the full resolvosome a probable DNA-RuvA(4)-RuvB(12)-RuvC(2) complex forms which resolves the HJ.

Its subcellular location is the cytoplasm. The enzyme catalyses ATP + H2O = ADP + phosphate + H(+). Its function is as follows. The RuvA-RuvB-RuvC complex processes Holliday junction (HJ) DNA during genetic recombination and DNA repair, while the RuvA-RuvB complex plays an important role in the rescue of blocked DNA replication forks via replication fork reversal (RFR). RuvA specifically binds to HJ cruciform DNA, conferring on it an open structure. The RuvB hexamer acts as an ATP-dependent pump, pulling dsDNA into and through the RuvAB complex. RuvB forms 2 homohexamers on either side of HJ DNA bound by 1 or 2 RuvA tetramers; 4 subunits per hexamer contact DNA at a time. Coordinated motions by a converter formed by DNA-disengaged RuvB subunits stimulates ATP hydrolysis and nucleotide exchange. Immobilization of the converter enables RuvB to convert the ATP-contained energy into a lever motion, pulling 2 nucleotides of DNA out of the RuvA tetramer per ATP hydrolyzed, thus driving DNA branch migration. The RuvB motors rotate together with the DNA substrate, which together with the progressing nucleotide cycle form the mechanistic basis for DNA recombination by continuous HJ branch migration. Branch migration allows RuvC to scan DNA until it finds its consensus sequence, where it cleaves and resolves cruciform DNA. This chain is Holliday junction branch migration complex subunit RuvB, found in Pseudomonas fluorescens (strain Pf0-1).